Here is a 196-residue protein sequence, read N- to C-terminus: MSCEEIAVCAVRLRENLCLYFEELECDAFCKDKTIKRFFRNVNSQLLVVRPDLNVAAFEDVTDQEVKSGSGMYFDIHCYKTTAPSARMPVAFSVQVEDKSYYMCCEKEHGKMVVRFREGEVPKDIPGESNIIFFKKTFTSCSSKAFKFEYSLEQGMFLAFEEEDSLRKLILKKLPREDEVDETTKFVTSHNERHNL.

The propeptide occupies 1-29; it reads MSCEEIAVCAVRLRENLCLYFEELECDAF.

The protein belongs to the IL-1 family. As to quaternary structure, forms a ternary complex with ligand-binding receptor subunit IL18R1 and signaling receptor subunit IL18RAP at the plasma membrane. Mature IL18 first binds to IL18R1 forming a low affinity binary complex, which then interacts with IL18RAP to form a high affinity ternary complex that signals inside the cell. Interacts with cargo receptor TMED10; the interaction mediates the translocation from the cytoplasm into the ERGIC (endoplasmic reticulum-Golgi intermediate compartment) and thereby secretion. In terms of processing, the pro-IL-18 precursor is processed by CASP1 or CASP4 to yield the active form.

It is found in the cytoplasm. The protein localises to the secreted. Its function is as follows. Augments natural killer cell activity in spleen cells and stimulates interferon gamma production in T-helper type I cells. Involved in transduction of inflammation downstream of pyroptosis: its mature form is specifically released in the extracellular milieu by passing through the gasdermin-D (GSDMD) pore. This is Interleukin-18 (IL18) from Gallus gallus (Chicken).